We begin with the raw amino-acid sequence, 876 residues long: GRB2-associated and regulator of MAPK protein (876 aa).

Residues 12-320 (KDVKWSPVAM…HQVKGDMWPE (309 aa)) form a CABIT region. Phosphotyrosine is present on tyrosine 105. Residues 427–448 (GDSGSDYLFPEANEESAGIPGK) form a disordered region. Tyrosine 453 carries the phosphotyrosine modification. 2 disordered regions span residues 460 to 501 (EGKP…ATLG) and 530 to 572 (LNAP…SYYS). Residues 498-550 (ATLGATIKSSEIALPPPPVPPKSEAVREECRLLNAPPVPPRSAKPLSTSPSIP) are necessary for interaction with GRB2. Polar residues predominate over residues 560-572 (QTRSPSPTLSYYS). A phosphoserine mark is found at serine 609 and serine 613. Composition is skewed to polar residues over residues 630–639 (SGASENQTRS) and 647–657 (RSYSYPRQKTP). 2 disordered regions span residues 630–664 (SGAS…KRTC) and 722–759 (CPAL…TAGS). Positions 811-876 (LSIEEVSKSL…QFINGWRPKI (66 aa)) constitute an SAM domain.

This sequence belongs to the GAREM family. As to quaternary structure, interacts with EGFR. Interacts (via proline-rich domain and phosphorylated at Tyr-105 and Tyr-453) with GRB2 (via SH3 domains); the interaction occurs upon EGF stimulation. Interacts (phosphorylated at Tyr-453) with PTPN11; the interaction increases MAPK/ERK activity and does not affect the GRB2/SOS complex formation. Post-translationally, on EGF stimulation, phosphorylated on Tyr-105 and Tyr-453.

Acts as an adapter protein that plays a role in intracellular signaling cascades triggered either by the cell surface activated epidermal growth factor receptor and/or cytoplasmic protein tyrosine kinases. Promotes activation of the MAPK/ERK signaling pathway. Plays a role in the regulation of cell proliferation. This chain is GRB2-associated and regulator of MAPK protein (Garem1), found in Mus musculus (Mouse).